The sequence spans 351 residues: N-terminal EF-hand calcium-binding protein 1 (351 aa).

The residue at position 4 (serine 4) is a Phosphoserine. EF-hand domains are found at residues 26 to 61 (KGMSIFLDILRRADKNDDGKLSFEEFKAYFADGVLS) and 60 to 95 (LSGEELHELFHTIDTHNTNNLDTEELCEYFSQHLGE). The Ca(2+) site is built by aspartate 39, asparagine 41, aspartate 43, lysine 45, and glutamate 50. Residues 135–163 (LLKETLNQLQSLQNSLECAMETTEEQTRQ) are a coiled coil. The interval 180–203 (GKRSSRRVQRHNSFSPNSPQFNVS) is disordered. Polar residues predominate over residues 190–202 (HNSFSPNSPQFNV). Residues serine 192 and serine 197 each carry the phosphoserine modification. Positions 209-275 (EEDNQWMTQI…EEFQLALKHY (67 aa)) form a coiled coil. In terms of domain architecture, ABM spans 252–340 (MLVQRQMSVI…LETPELTSTM (89 aa)).

As to quaternary structure, interacts with STX1. May interact with CPNE6. As to expression, expressed in brain (at protein level).

It localises to the cytoplasm. The chain is N-terminal EF-hand calcium-binding protein 1 (NECAB1) from Homo sapiens (Human).